The chain runs to 624 residues: Polycystin-2-like protein 2 (624 aa).

The Cytoplasmic segment spans residues 1–31 (MAEASRWHRGGASKHKLHYRKEVEITTTLQE). A helical transmembrane segment spans residues 32–52 (LLLYFIFLINLCILTFGMVNP). The Extracellular portion of the chain corresponds to 53 to 276 (HMYYLNKVMS…YSVKLLRYVS (224 aa)). Residues Asn115 and Asn138 are each glycosylated (N-linked (GlcNAc...) asparagine). Residues 277–297 (YYDYFIASCEITFCIFLFVFT) form a helical membrane-spanning segment. The Cytoplasmic segment spans residues 298 to 314 (TQEVKKIKEFKSAYFKS). The chain crosses the membrane as a helical span at residues 315–335 (IWNWLELLLLLLCFVAVSFNT). At 336–360 (YYNVQIFLLLGQLLKSTEKYSDFYF) the chain is on the extracellular side. The chain crosses the membrane as a helical span at residues 361-381 (LACWHIYYNNIIAITIFFAWI). Residues 382-406 (KIFKFISFNKTMSQLSSTLSRCVKD) lie on the Cytoplasmic side of the membrane. The helical transmembrane segment at 407 to 427 (IVGFAIMFFIIFFAYAQLGFL) threads the bilayer. At 428 to 469 (VFGSQVDDFSTFQNSIFAQFRIVLGDFNFAGIQQANPILGPI) the chain is on the extracellular side. Residues 470–490 (YFITFIFFVFFVLLNMFLAII) form a helical membrane-spanning segment. At 491–624 (NDTYSEVKAD…NQVVRKVSAL (134 aa)) the chain is on the cytoplasmic side. A coiled-coil region spans residues 556-576 (ENEIQNAEQMKKWKERLEKKY).

The protein belongs to the polycystin family. Interacts with TRPC1 and TRPC5. Expressed only in testis. Expressed also in brain and kidney. As to expression, expressed only in transformed lymphoblasts.

The protein resides in the membrane. Functionally, exhibits a lower single conductance but no spontaneous channel activity. May function as a regulator of calcium channels or a channel component involving Ca2(+) homeostasis. This chain is Polycystin-2-like protein 2, found in Homo sapiens (Human).